The sequence spans 168 residues: Type-2 ice-structuring protein (168 aa).

A signal peptide spans 1-17 (MLTVSLLVCAMMALTQA). Positions 18–34 (DHDGVLKGTATEAGEVS) are excised as a propeptide. 5 disulfide bridges follow: C45-C56, C73-C163, C107-C138, C127-C149, and C139-C155. Positions 52 to 164 (HGQRCFYSEA…CPASHASICA (113 aa)) constitute a C-type lectin domain.

It is found in the secreted. Functionally, has antifreeze activity to protect fish blood from freezing at subzero sea water temperatures. Binds to ice crystals and inhibits their growth. The thermal hysteresis (TH) activity, the ability to lower the blood freezing point, is approximately 0.45 degrees Celsius at 0.15 mM for this protein. The sequence is that of Type-2 ice-structuring protein from Brachyopsis segaliensis (Sea poacher).